The primary structure comprises 467 residues: Dimethylamine methyltransferase MtbB1 (467 aa).

Residue O356 is a non-standard amino acid, pyrrolysine.

The protein belongs to the dimethylamine methyltransferase family.

The catalysed reaction is Co(I)-[dimethylamine-specific corrinoid protein] + dimethylamine + H(+) = methyl-Co(III)-[dimethylamine-specific corrinoid protein] + methylamine. It participates in one-carbon metabolism; methanogenesis from dimethylamine. In terms of biological role, catalyzes the transfer of a methyl group from dimethylamine to the corrinoid cofactor of MtbC. The chain is Dimethylamine methyltransferase MtbB1 (mtbB1) from Methanosarcina acetivorans (strain ATCC 35395 / DSM 2834 / JCM 12185 / C2A).